Reading from the N-terminus, the 120-residue chain is Large ribosomal subunit protein bL20 (120 aa).

It belongs to the bacterial ribosomal protein bL20 family.

Its function is as follows. Binds directly to 23S ribosomal RNA and is necessary for the in vitro assembly process of the 50S ribosomal subunit. It is not involved in the protein synthesizing functions of that subunit. This is Large ribosomal subunit protein bL20 from Cereibacter sphaeroides (strain ATCC 17029 / ATH 2.4.9) (Rhodobacter sphaeroides).